The primary structure comprises 286 residues: Bifunctional protein FolD (286 aa).

NADP(+)-binding positions include 163 to 165, Ile-188, and Ile-229; that span reads GMS.

This sequence belongs to the tetrahydrofolate dehydrogenase/cyclohydrolase family. As to quaternary structure, homodimer.

The catalysed reaction is (6R)-5,10-methylene-5,6,7,8-tetrahydrofolate + NADP(+) = (6R)-5,10-methenyltetrahydrofolate + NADPH. It carries out the reaction (6R)-5,10-methenyltetrahydrofolate + H2O = (6R)-10-formyltetrahydrofolate + H(+). Its pathway is one-carbon metabolism; tetrahydrofolate interconversion. Catalyzes the oxidation of 5,10-methylenetetrahydrofolate to 5,10-methenyltetrahydrofolate and then the hydrolysis of 5,10-methenyltetrahydrofolate to 10-formyltetrahydrofolate. This Helicobacter hepaticus (strain ATCC 51449 / 3B1) protein is Bifunctional protein FolD.